A 49-amino-acid polypeptide reads, in one-letter code: MLELLKSLVFAVIMVPVVMAIILGLIYGLGEVFNIFSGVGKKDQPGQNH.

The Periplasmic segment spans residues 1 to 7 (MLELLKS). A helical transmembrane segment spans residues 8 to 28 (LVFAVIMVPVVMAIILGLIYG). Residues 29 to 49 (LGEVFNIFSGVGKKDQPGQNH) are Cytoplasmic-facing.

Belongs to the AcrZ family. In terms of assembly, part of the AcrA-AcrB-AcrZ-TolC efflux pump, interacts directly with AcrB.

It is found in the cell inner membrane. Its function is as follows. AcrA-AcrB-AcrZ-TolC is a drug efflux protein complex with a broad substrate specificity. This protein binds to AcrB and is required for efflux of some but not all substrates, suggesting it may influence the specificity of drug export. The protein is Multidrug efflux pump accessory protein AcrZ of Escherichia coli O157:H7.